The following is a 637-amino-acid chain: Protein kinase domain-containing protein ppk3 (637 aa).

In terms of domain architecture, Protein kinase spans 1 to 296 (MDFIKSAASF…QLLSSKLEVI (296 aa)). The HEAT repeat unit spans residues 414–450 (KTLNNELLRSLAVVQNDQHPTLRTNSTICLGKIAEYL). A compositionally biased stretch (basic and acidic residues) spans 576 to 586 (NDTTEIKEKKN). The interval 576-637 (NDTTEIKEKK…ENNVEESWGL (62 aa)) is disordered. Residues 608–631 (ETEEQIDESWMENWNDEEETENNV) are compositionally biased toward acidic residues.

The protein resides in the golgi apparatus. This chain is Protein kinase domain-containing protein ppk3 (ppk3), found in Schizosaccharomyces pombe (strain 972 / ATCC 24843) (Fission yeast).